We begin with the raw amino-acid sequence, 416 residues long: Pectin acetylesterase 3 (416 aa).

The signal sequence occupies residues 1 to 25 (MKSVLRIAAAIFWLWLFIVLGVIGS). Residue Asn-131 is glycosylated (N-linked (GlcNAc...) asparagine). Active-site charge relay system residues include Ser-198 and Asp-294. The N-linked (GlcNAc...) asparagine glycan is linked to Asn-324. The active-site Charge relay system is the His-361.

The protein belongs to the pectinacetylesterase family.

It is found in the secreted. The protein localises to the cell wall. In terms of biological role, hydrolyzes acetyl esters in homogalacturonan regions of pectin. In type I primary cell wall, galacturonic acid residues of pectin can be acetylated at the O-2 and O-3 positions. Decreasing the degree of acetylation of pectin gels in vitro alters their physical properties. This chain is Pectin acetylesterase 3, found in Arabidopsis thaliana (Mouse-ear cress).